A 476-amino-acid polypeptide reads, in one-letter code: ATP synthase subunit beta (476 aa).

162-169 (GGAGVGKT) is an ATP binding site.

The protein belongs to the ATPase alpha/beta chains family. In terms of assembly, F-type ATPases have 2 components, CF(1) - the catalytic core - and CF(0) - the membrane proton channel. CF(1) has five subunits: alpha(3), beta(3), gamma(1), delta(1), epsilon(1). CF(0) has three main subunits: a(1), b(2) and c(9-12). The alpha and beta chains form an alternating ring which encloses part of the gamma chain. CF(1) is attached to CF(0) by a central stalk formed by the gamma and epsilon chains, while a peripheral stalk is formed by the delta and b chains.

The protein resides in the cell membrane. The enzyme catalyses ATP + H2O + 4 H(+)(in) = ADP + phosphate + 5 H(+)(out). Its function is as follows. Produces ATP from ADP in the presence of a proton gradient across the membrane. The catalytic sites are hosted primarily by the beta subunits. This Mycoplasma capricolum subsp. capricolum (strain California kid / ATCC 27343 / NCTC 10154) protein is ATP synthase subunit beta.